The primary structure comprises 600 residues: Adenine deaminase (600 aa).

The protein belongs to the metallo-dependent hydrolases superfamily. Adenine deaminase family. The cofactor is Mn(2+).

The catalysed reaction is adenine + H2O + H(+) = hypoxanthine + NH4(+). This Chelativorans sp. (strain BNC1) protein is Adenine deaminase.